The primary structure comprises 300 residues: uncharacterized protein (300 aa).

The active-site Charge relay system is Ser-49. The Proton donor role is filled by Tyr-137. Residue Lys-165 is the Schiff-base intermediate with substrate of the active site.

The protein belongs to the DapA family. Homotetramer.

Its subcellular location is the cytoplasm. Upon expression in E.coli complements a dapA deletion mutation, but this may not be its physiological function. This is an uncharacterized protein from Rhizobium meliloti (Ensifer meliloti).